The chain runs to 297 residues: Large ribosomal subunit protein uL18 (297 aa).

The protein belongs to the universal ribosomal protein uL18 family. Component of the large ribosomal subunit (LSU).

It localises to the cytoplasm. The protein localises to the nucleus. Component of the ribosome, a large ribonucleoprotein complex responsible for the synthesis of proteins in the cell. The small ribosomal subunit (SSU) binds messenger RNAs (mRNAs) and translates the encoded message by selecting cognate aminoacyl-transfer RNA (tRNA) molecules. The large subunit (LSU) contains the ribosomal catalytic site termed the peptidyl transferase center (PTC), which catalyzes the formation of peptide bonds, thereby polymerizing the amino acids delivered by tRNAs into a polypeptide chain. The nascent polypeptides leave the ribosome through a tunnel in the LSU and interact with protein factors that function in enzymatic processing, targeting, and the membrane insertion of nascent chains at the exit of the ribosomal tunnel. The chain is Large ribosomal subunit protein uL18 (RpL5) from Lysiphlebus testaceipes (Greenbugs aphid parastoid).